The sequence spans 671 residues: DNA ligase (671 aa).

Residues 32–36 (DAEYD), 81–82 (SL), and Glu-113 each bind NAD(+). Lys-115 acts as the N6-AMP-lysine intermediate in catalysis. Positions 136, 173, 290, and 314 each coordinate NAD(+). The Zn(2+) site is built by Cys-408, Cys-411, Cys-426, and Cys-432. A BRCT domain is found at 593–671 (EIDSPFAGKT…EAEMLRLLGS (79 aa)).

It belongs to the NAD-dependent DNA ligase family. LigA subfamily. Mg(2+) serves as cofactor. Mn(2+) is required as a cofactor.

The catalysed reaction is NAD(+) + (deoxyribonucleotide)n-3'-hydroxyl + 5'-phospho-(deoxyribonucleotide)m = (deoxyribonucleotide)n+m + AMP + beta-nicotinamide D-nucleotide.. In terms of biological role, DNA ligase that catalyzes the formation of phosphodiester linkages between 5'-phosphoryl and 3'-hydroxyl groups in double-stranded DNA using NAD as a coenzyme and as the energy source for the reaction. It is essential for DNA replication and repair of damaged DNA. The sequence is that of DNA ligase from Escherichia coli (strain ATCC 8739 / DSM 1576 / NBRC 3972 / NCIMB 8545 / WDCM 00012 / Crooks).